The sequence spans 209 residues: E3 ubiquitin-protein ligase RNF138 (209 aa).

The RING-type zinc finger occupies 18 to 58 (CPVCQEVLKTPVRTAACQHVFCRKCFLTAMRESGIHCPLCR). Zn(2+)-binding residues include Cys-86, Cys-89, His-101, and Cys-105. Residues 86–105 (CRCCSKKIKFYRMRHHYKSC) form a C2HC RNF-type zinc finger. The disordered stretch occupies residues 125-154 (QDSVRSSNRSETSASDNTETYQEDTSSSGH). Position 142 is a phosphothreonine (Thr-142). A C2H2-type zinc finger spans residues 157–180 (FKCPLCQESNFTRQRLLDHCNSNH). Residues 189–207 (LQLDEETQYQTAVEESFQV) enclose the UIM domain.

Interacts with NLK. Interacts with XRCC5/Ku80. Interacts with RBBP8/CtIP. In terms of processing, auto-ubiquitinated.

It is found in the chromosome. The enzyme catalyses S-ubiquitinyl-[E2 ubiquitin-conjugating enzyme]-L-cysteine + [acceptor protein]-L-lysine = [E2 ubiquitin-conjugating enzyme]-L-cysteine + N(6)-ubiquitinyl-[acceptor protein]-L-lysine.. It participates in protein modification; protein ubiquitination. In terms of biological role, E3 ubiquitin-protein ligase involved in DNA damage response by promoting DNA resection and homologous recombination. Recruited to sites of double-strand breaks following DNA damage and specifically promotes double-strand break repair via homologous recombination. Two different, non-exclusive, mechanisms have been proposed. According to a report, regulates the choice of double-strand break repair by favoring homologous recombination over non-homologous end joining (NHEJ): acts by mediating ubiquitination of XRCC5/Ku80, leading to remove the Ku complex from DNA breaks, thereby promoting homologous recombination. According to another report, cooperates with UBE2Ds E2 ubiquitin ligases (UBE2D1, UBE2D2, UBE2D3 or UBE2D4) to promote homologous recombination by mediating ubiquitination of RBBP8/CtIP. Together with NLK, involved in the ubiquitination and degradation of TCF/LEF. Also exhibits auto-ubiquitination activity in combination with UBE2K. May act as a negative regulator in the Wnt/beta-catenin-mediated signaling pathway. The chain is E3 ubiquitin-protein ligase RNF138 from Rattus norvegicus (Rat).